The primary structure comprises 553 residues: MDEKKLFLTALKKKFEVEDPDEKYTNFYCFGGWEQSARKKEFTEYAKKAAEKRGGIPFYNPDIGVPLGQRKLMAYRVSGTDAYVEGDDLHFVNNAAIQQMVDDIKRTVIVGMDTAHAVLEKRLGVEVTPETINEYMEAINHALPGGAVVQEHMVEVHPGLVEDCYAKIFTGDDNLADELDKRILIDINKEFPEEQAEQLKSYIGNRTYQVNRVPTIVVRTCDGGTVSRWSAMQIGMSFISAYKLCAGEAAIADFSYAAKHADVIEMGTIMPARRARGPNEPGGVAFGTFADIVQASRVSDDPAKISLEVIAGAAALYDQVWLGSYMSGGVGFTQYATAAYTDDILDDFVYYGMEYVDDKYGICGTKPTMDVVRDISTEVTLYSLEQYEEYPTLLEDHFGGSQRAAVAAAAAGCSTAFATGNSNAGINGWYLSQILHKEAHSRLGFYGYDLQDQCGASNSLSIRSDEGLIHELRGPNYPNYAMNVGHQPEYAGIAQAPHAARGDAFCTNPLIKVAFADKDLSFDFTSPRKSIAAGALREFMPEGERDLIIPAGK.

Gln150 serves as a coordination point for coenzyme F430. Coenzyme B is bound by residues Arg228, 259–260, and Arg273; that span reads KH. His260 is subject to Pros-methylhistidine. Arg274 is subject to 5-methylarginine. Position 335 (Tyr335) interacts with coenzyme M. At Gln402 the chain carries 2-methylglutamine. Position 446 (Tyr446) interacts with coenzyme M. 1-thioglycine is present on Gly447. Asp452 carries the (Z)-2,3-didehydroaspartate modification. Cys454 is subject to S-methylcysteine.

It belongs to the methyl-coenzyme M reductase alpha subunit family. In terms of assembly, MCR is a hexamer of two alpha, two beta, and two gamma chains, forming a dimer of heterotrimers. Coenzyme F430 is required as a cofactor. Post-translationally, the alpha subunit contains six modified amino acids near the active site region. Is methylated on His-260, Arg-274, Gln-402 and Cys-454, probably by the action of specific S-adenosylmethionine-dependent methyltransferases. Also contains a thioglycine at position 447, forming a thiopeptide bond. Contains a didehydroaspartate residue at position 452. The methylation on C5 of Arg-274 is a post-translational methylation not essential in vivo, but which plays a role for the stability and structural integrity of MCR.

It carries out the reaction coenzyme B + methyl-coenzyme M = methane + coenzyme M-coenzyme B heterodisulfide. Its pathway is one-carbon metabolism; methyl-coenzyme M reduction; methane from methyl-coenzyme M: step 1/1. Its function is as follows. Component of the methyl-coenzyme M reductase (MCR) I that catalyzes the reductive cleavage of methyl-coenzyme M (CoM-S-CH3 or 2-(methylthio)ethanesulfonate) using coenzyme B (CoB or 7-mercaptoheptanoylthreonine phosphate) as reductant which results in the production of methane and the mixed heterodisulfide of CoB and CoM (CoM-S-S-CoB). This is the final step in methanogenesis. This is Methyl-coenzyme M reductase II subunit alpha (mrtA) from Methanothermobacter thermautotrophicus (strain ATCC 29096 / DSM 1053 / JCM 10044 / NBRC 100330 / Delta H) (Methanobacterium thermoautotrophicum).